The following is a 533-amino-acid chain: Subtilisin-like serine protease pepC (533 aa).

The first 16 residues, Met-1–Ala-16, serve as a signal peptide directing secretion. Residues Ser-43–Met-136 form the Inhibitor I9 domain. A Peptidase S8 domain is found at Pro-145–Thr-450. Catalysis depends on charge relay system residues Asp-181 and His-213. Residue Asn-283 is glycosylated (N-linked (GlcNAc...) asparagine). Cys-320 and Cys-351 are disulfide-bonded. Catalysis depends on Ser-379, which acts as the Charge relay system. The N-linked (GlcNAc...) asparagine glycan is linked to Asn-435. Residues Lys-496–Pro-513 show a composition bias toward polar residues. Positions Lys-496–Glu-519 are disordered.

The protein belongs to the peptidase S8 family.

This chain is Subtilisin-like serine protease pepC (pepC), found in Aspergillus niger.